A 119-amino-acid polypeptide reads, in one-letter code: Histone H1B, sperm (119 aa).

Positions Thr8–Lys77 constitute an H15 domain. The disordered stretch occupies residues Asn76–Asn119. Positions Leu80–Asn119 are enriched in basic residues.

Belongs to the histone H1/H5 family.

The protein resides in the nucleus. It is found in the chromosome. Histones H1 are necessary for the condensation of nucleosome chains into higher-order structures. This is Histone H1B, sperm from Platynereis dumerilii (Dumeril's clam worm).